We begin with the raw amino-acid sequence, 37 residues long: Mastoparan-VT (37 aa).

Positions 1–22 are excised as a propeptide; that stretch reads EALADPIADPVAGPNPEADPEA. AXPX repeat units lie at residues 4–7, 8–11, 12–15, and 18–21; these read ADPI, ADPV, AGPN, and ADPE. At Leu-36 the chain carries Leucine amide.

Belongs to the MCD family. Mastoparan subfamily. In terms of tissue distribution, expressed by the venom gland.

Its subcellular location is the secreted. The protein localises to the target cell membrane. Functionally, antimicrobial peptide with potent activity against both Gram-positive (S.aureus MIC=50 ug/ml, and B.subtilis MIC=25 ug/ml) and Gram-negative bacteria (P.aeruginosa MIC=25 ug/ml, E.coli MIC=3-50 ug/ml, K.pneumoniae MIC=25 ug/ml). Exhibits little hemolytic activity on human erythrocytes. The sequence is that of Mastoparan-VT from Vespa tropica (Greater banded hornet).